The chain runs to 562 residues: Glutamate--tRNA ligase (562 aa).

Residues 101-111 (PEPNGYPHIGH) carry the 'HIGH' region motif.

This sequence belongs to the class-I aminoacyl-tRNA synthetase family. Glutamate--tRNA ligase type 2 subfamily.

Its subcellular location is the cytoplasm. The catalysed reaction is tRNA(Glu) + L-glutamate + ATP = L-glutamyl-tRNA(Glu) + AMP + diphosphate. Its function is as follows. Catalyzes the attachment of glutamate to tRNA(Glu) in a two-step reaction: glutamate is first activated by ATP to form Glu-AMP and then transferred to the acceptor end of tRNA(Glu). The sequence is that of Glutamate--tRNA ligase from Cenarchaeum symbiosum (strain A).